An 85-amino-acid polypeptide reads, in one-letter code: Phosphocarrier protein HPr (85 aa).

An HPr domain is found at Met-1–Glu-85. His-15 serves as the catalytic Pros-phosphohistidine intermediate.

Belongs to the HPr family.

It is found in the cytoplasm. In terms of biological role, general (non sugar-specific) component of the phosphoenolpyruvate-dependent sugar phosphotransferase system (sugar PTS). This major carbohydrate active-transport system catalyzes the phosphorylation of incoming sugar substrates concomitantly with their translocation across the cell membrane. The phosphoryl group from phosphoenolpyruvate (PEP) is transferred to the phosphoryl carrier protein HPr by enzyme I. Phospho-HPr then transfers it to the PTS EIIA domain. This Buchnera aphidicola subsp. Acyrthosiphon pisum (strain APS) (Acyrthosiphon pisum symbiotic bacterium) protein is Phosphocarrier protein HPr (ptsH).